A 408-amino-acid polypeptide reads, in one-letter code: Acetylornithine aminotransferase (408 aa).

Residues 107–108 (GT) and Phe-141 contribute to the pyridoxal 5'-phosphate site. N(2)-acetyl-L-ornithine is bound at residue Arg-144. 227-230 (DEIQ) contributes to the pyridoxal 5'-phosphate binding site. Lys-256 is subject to N6-(pyridoxal phosphate)lysine. Thr-284 serves as a coordination point for N(2)-acetyl-L-ornithine. Pyridoxal 5'-phosphate is bound at residue Thr-285.

It belongs to the class-III pyridoxal-phosphate-dependent aminotransferase family. ArgD subfamily. Homodimer. The cofactor is pyridoxal 5'-phosphate.

The protein localises to the cytoplasm. The enzyme catalyses N(2)-acetyl-L-ornithine + 2-oxoglutarate = N-acetyl-L-glutamate 5-semialdehyde + L-glutamate. It participates in amino-acid biosynthesis; L-arginine biosynthesis; N(2)-acetyl-L-ornithine from L-glutamate: step 4/4. In Xanthomonas axonopodis pv. citri (strain 306), this protein is Acetylornithine aminotransferase.